Here is a 355-residue protein sequence, read N- to C-terminus: tRNA-specific 2-thiouridylase MnmA (355 aa).

ATP-binding positions include 6-13 (AMSGGVDS) and Met32. Catalysis depends on Cys93, which acts as the Nucleophile. Cys93 and Cys191 form a disulfide bridge. An ATP-binding site is contributed by Gly117. Positions 140–142 (KDQ) are interaction with tRNA. Cys191 serves as the catalytic Cysteine persulfide intermediate. Positions 296–297 (RY) are interaction with tRNA.

It belongs to the MnmA/TRMU family.

It is found in the cytoplasm. It catalyses the reaction S-sulfanyl-L-cysteinyl-[protein] + uridine(34) in tRNA + AH2 + ATP = 2-thiouridine(34) in tRNA + L-cysteinyl-[protein] + A + AMP + diphosphate + H(+). Catalyzes the 2-thiolation of uridine at the wobble position (U34) of tRNA, leading to the formation of s(2)U34. In Pelobacter propionicus (strain DSM 2379 / NBRC 103807 / OttBd1), this protein is tRNA-specific 2-thiouridylase MnmA.